The sequence spans 256 residues: 3-dehydroquinate dehydratase (256 aa).

3-dehydroquinate contacts are provided by residues S19, 38–40 (EIR), and R68. H122 serves as the catalytic Proton donor/acceptor. K147 serves as the catalytic Schiff-base intermediate with substrate. The 3-dehydroquinate site is built by R185, T204, and Q208.

The protein belongs to the type-I 3-dehydroquinase family. In terms of assembly, homodimer.

The catalysed reaction is 3-dehydroquinate = 3-dehydroshikimate + H2O. The protein operates within metabolic intermediate biosynthesis; chorismate biosynthesis; chorismate from D-erythrose 4-phosphate and phosphoenolpyruvate: step 3/7. In terms of biological role, involved in the third step of the chorismate pathway, which leads to the biosynthesis of aromatic amino acids. Catalyzes the cis-dehydration of 3-dehydroquinate (DHQ) and introduces the first double bond of the aromatic ring to yield 3-dehydroshikimate. In Methanospirillum hungatei JF-1 (strain ATCC 27890 / DSM 864 / NBRC 100397 / JF-1), this protein is 3-dehydroquinate dehydratase.